The following is a 447-amino-acid chain: Cobyrinate a,c-diamide synthase (447 aa).

Residues 252 to 439 enclose the GATase cobBQ-type domain; the sequence is KIAVAFDESF…AHQHCIGNPY (188 aa). The active-site Nucleophile is the Cys331.

This sequence belongs to the CobB/CbiA family. Requires Mg(2+) as cofactor.

The catalysed reaction is cob(II)yrinate + 2 L-glutamine + 2 ATP + 2 H2O = cob(II)yrinate a,c diamide + 2 L-glutamate + 2 ADP + 2 phosphate + 2 H(+). It carries out the reaction Ni-sirohydrochlorin + 2 L-glutamine + 2 ATP + 2 H2O = Ni-sirohydrochlorin a,c-diamide + 2 L-glutamate + 2 ADP + 2 phosphate + 2 H(+). Its pathway is cofactor biosynthesis; adenosylcobalamin biosynthesis; cob(II)yrinate a,c-diamide from sirohydrochlorin (anaerobic route): step 10/10. Its function is as follows. Catalyzes the ATP-dependent amidation of the two carboxylate groups at positions a and c of cobyrinate, using either L-glutamine or ammonia as the nitrogen source. Involved in the biosynthesis of the unique nickel-containing tetrapyrrole coenzyme F430, the prosthetic group of methyl-coenzyme M reductase (MCR), which plays a key role in methanogenesis and anaerobic methane oxidation. Catalyzes the ATP-dependent amidation of the two carboxylate groups at positions a and c of Ni-sirohydrochlorin, using L-glutamine or ammonia as the nitrogen source. The chain is Cobyrinate a,c-diamide synthase from Methanococcus maripaludis (strain C7 / ATCC BAA-1331).